Reading from the N-terminus, the 504-residue chain is O-phosphoseryl-tRNA(Sec) selenium transferase (504 aa).

The tract at residues 1–44 (MNPESFAAGERRVSPAYVRQGCEARRAHEHLIRLLLEQGKCPED) is tetramerization. Ser14 carries the phosphoserine modification. Pyridoxal 5'-phosphate is bound at residue Arg75. Residues 96-106 (GRSGDISAVQP) form a phosphate loop (P-loop) region. Substrate contacts are provided by Arg97, Ser98, and Gln105. Arg271 serves as a coordination point for tRNA. Lys284 bears the N6-(pyridoxal phosphate)lysine mark. Arg313 provides a ligand contact to substrate. Arg398 and Lys463 together coordinate tRNA.

It belongs to the SepSecS family. As to quaternary structure, homotetramer formed by a catalytic dimer and a non-catalytic dimer serving as a binding platform that orients tRNASec for catalysis. Each tetramer binds the CCA ends of two tRNAs which point to the active sites of the catalytic dimer. Requires pyridoxal 5'-phosphate as cofactor.

It is found in the cytoplasm. It carries out the reaction O-phospho-L-seryl-tRNA(Sec) + selenophosphate + H2O = L-selenocysteinyl-tRNA(Sec) + 2 phosphate. It functions in the pathway aminoacyl-tRNA biosynthesis; selenocysteinyl-tRNA(Sec) biosynthesis; selenocysteinyl-tRNA(Sec) from L-seryl-tRNA(Sec) (archaeal/eukaryal route): step 2/2. Its function is as follows. Converts O-phosphoseryl-tRNA(Sec) to selenocysteinyl-tRNA(Sec) required for selenoprotein biosynthesis. This is O-phosphoseryl-tRNA(Sec) selenium transferase (Sepsecs) from Mus musculus (Mouse).